The chain runs to 509 residues: MDNMGKDKNILKIRANLIKYIDVDEIEELPKVKVKNVEEFLEAHRVLGKHVICRYKDNLEDIFFFVDNGVIFYIPSDGFKTLEDLIEAKSLGLSAEEYYEYLEFGDINEYKKYKSSGFKSIEEYKKAKDLGFIGGLEELVKEGIAQRLDDKYIIEYLYYGILENREFSNDAELYYFAIEKGFSDFDELKNALKAGFGDANEYKDALNRGFKDAYEYNDALSKGFRDADEYKIAKAIGVNSKKELEEYMELKRICENFGLETFEEGYLLKVLMDLKIDEEITLKELYNKLKEKERLMKIKKDVLNKLANLSSPSWYSTRFTTVDDLEEYLVDSEIVSYLGEYIKEEKIFRRIYPPKPSRRIVIIDAISVLNNMHNLSPNSIENLIKKIKNAGFKNIITVMDTVTYYKIKGKDICRFLANECNIKVSKSKDEAYKLIIEYIKNFGALVISNASFKDYIIKDSKLFYKDIKEYIIPFIVENGEINLDIELLRKLYTEVVTKRIEKIKSNVVS.

In terms of domain architecture, RNase NYN spans 358–480 (RRIVIIDAIS…IIPFIVENGE (123 aa)).

This is an uncharacterized protein from Methanocaldococcus jannaschii (strain ATCC 43067 / DSM 2661 / JAL-1 / JCM 10045 / NBRC 100440) (Methanococcus jannaschii).